Consider the following 349-residue polypeptide: Green-sensitive opsin-4 (349 aa).

At 1-36 (MNGTEGNNFYIPLSNRTGLARSPYEYPQYYLAEPWQ) the chain is on the extracellular side. N-linked (GlcNAc...) asparagine glycans are attached at residues asparagine 2 and asparagine 15. Residues 37 to 61 (FKLLAVYMFFLICLGFPINGLTLLV) traverse the membrane as a helical segment. Residues 62–73 (TAQHKKLRQPLN) are Cytoplasmic-facing. A helical transmembrane segment spans residues 74–99 (FILVNLAVAGTIMVCFGFTVTFYTAI). Residues 100-113 (NGYFVLGPTGCAIE) are Extracellular-facing. Cysteine 110 and cysteine 187 are joined by a disulfide. The helical transmembrane segment at 114 to 133 (GFMATLGGEVALWSLVVLAV) threads the bilayer. Residues 134–152 (ERYIVVCKPMGSFKFSASH) are Cytoplasmic-facing. The helical transmembrane segment at 153–176 (AFAGCAFTWVMAMACAAPPLVGWS) threads the bilayer. At 177-202 (RYIPEGMQCSCGPDYYTLNPEYNNES) the chain is on the extracellular side. N-linked (GlcNAc...) asparagine glycosylation is present at asparagine 200. A helical transmembrane segment spans residues 203–230 (YVLYMFICHFILPVTIIFFTYGRLVCTV). Residues 231–252 (KAAAAQQQESESTQKAEREVTR) are Cytoplasmic-facing. A helical transmembrane segment spans residues 253 to 276 (MVILMVLGFLIAWTPYATVAAWIF). The Extracellular segment spans residues 277-284 (FNKGAAFS). The helical transmembrane segment at 285-309 (AQFMAVPAFFSKTSALYNPVIYVLL) threads the bilayer. Lysine 296 bears the N6-(retinylidene)lysine mark. Residues 310–349 (NKQFRNCMLTTLFCGKNPLGDDESSTVSTSKTEVSSVSPA) lie on the Cytoplasmic side of the membrane. The tract at residues 329–349 (GDDESSTVSTSKTEVSSVSPA) is disordered. The span at 334–349 (STVSTSKTEVSSVSPA) shows a compositional bias: low complexity.

The protein belongs to the G-protein coupled receptor 1 family. Opsin subfamily. In terms of processing, phosphorylated on some or all of the serine and threonine residues present in the C-terminal region. Retinal double cone accessory photoreceptor cell outer segments.

Its subcellular location is the membrane. In terms of biological role, visual pigments are the light-absorbing molecules that mediate vision. They consist of an apoprotein, opsin, covalently linked to cis-retinal. This is Green-sensitive opsin-4 (opn1mw4) from Danio rerio (Zebrafish).